We begin with the raw amino-acid sequence, 363 residues long: MAGNSIGQLFRVTTCGESHGVGLMAIVDGVPPGLALTEEDLQKDLDRRKPGTSKFATQRKEPDQVEIISGVFEGKTTGTPIGLLIRNTDQKSKDYGNIAQTFRPGHADYTYTQKYGFRDYRGGGRSSARETAMRVAAGAIAKKYLAEKFGVLIRGHVTQIGNEVAEKLDWNEVPNNPFFCGDVDAVPRFEALVTSLREQGTSCGAKLEILAEKVPVGWGEPVFDRLDADIAHAMMSINAVKGVEIGDGFAVAGQFGHETRDELTSHGFLANHAGGILGGISSGQTIRVAIALKPTASITTPGKTINLNREDTDVLTKGRHDPCVGVRATPIAEAMLAIVLMDHFLRHRAQNADVVPPFAPIEP.

Arg-48 is a binding site for NADP(+). Residues 125 to 127 (RSS), 238 to 239 (NA), Gly-278, 293 to 297 (KPTAS), and Arg-319 each bind FMN.

The protein belongs to the chorismate synthase family. As to quaternary structure, homotetramer. Requires FMNH2 as cofactor.

The enzyme catalyses 5-O-(1-carboxyvinyl)-3-phosphoshikimate = chorismate + phosphate. The protein operates within metabolic intermediate biosynthesis; chorismate biosynthesis; chorismate from D-erythrose 4-phosphate and phosphoenolpyruvate: step 7/7. In terms of biological role, catalyzes the anti-1,4-elimination of the C-3 phosphate and the C-6 proR hydrogen from 5-enolpyruvylshikimate-3-phosphate (EPSP) to yield chorismate, which is the branch point compound that serves as the starting substrate for the three terminal pathways of aromatic amino acid biosynthesis. This reaction introduces a second double bond into the aromatic ring system. This is Chorismate synthase from Acinetobacter baumannii (strain AB0057).